The sequence spans 142 residues: Large ribosomal subunit protein uL11 (142 aa).

The protein belongs to the universal ribosomal protein uL11 family. Part of the ribosomal stalk of the 50S ribosomal subunit. Interacts with L10 and the large rRNA to form the base of the stalk. L10 forms an elongated spine to which L12 dimers bind in a sequential fashion forming a multimeric L10(L12)X complex. Post-translationally, one or more lysine residues are methylated.

Functionally, forms part of the ribosomal stalk which helps the ribosome interact with GTP-bound translation factors. The protein is Large ribosomal subunit protein uL11 of Shewanella sp. (strain W3-18-1).